We begin with the raw amino-acid sequence, 422 residues long: tRNA(Met) cytidine acetate ligase (422 aa).

ATP contacts are provided by residues 7 to 20 (ITEYNPFHNGHLYH), Gly102, Asn172, and Arg197.

The protein belongs to the TmcAL family.

Its subcellular location is the cytoplasm. The catalysed reaction is cytidine(34) in elongator tRNA(Met) + acetate + ATP = N(4)-acetylcytidine(34) in elongator tRNA(Met) + AMP + diphosphate. In terms of biological role, catalyzes the formation of N(4)-acetylcytidine (ac(4)C) at the wobble position of elongator tRNA(Met), using acetate and ATP as substrates. First activates an acetate ion to form acetyladenylate (Ac-AMP) and then transfers the acetyl group to tRNA to form ac(4)C34. This chain is tRNA(Met) cytidine acetate ligase, found in Halothermothrix orenii (strain H 168 / OCM 544 / DSM 9562).